We begin with the raw amino-acid sequence, 727 residues long: ABC transporter G family member STR2 (727 aa).

The Cytoplasmic segment spans residues 1 to 475 (MKTQGLELET…NFTNIRRTPE (475 aa)). An ABC transporter domain is found at 25-275 (LEFESLTYTV…LNRMGRKIPK (251 aa)). Residue 69 to 76 (GPSGAGKS) coordinates ATP. The chain crosses the membrane as a helical span at residues 476–496 (LFLSRLMVLTFMGVMMATMFH). Residues 497–510 (NPKNTLQGITNRLS) lie on the Extracellular side of the membrane. The helical transmembrane segment at 511–531 (FFIFTVCLFFFSSNDAVPAFI) threads the bilayer. Over 532 to 559 (QERFIFIRETSHNAYRASCYTIASLITH) the chain is Cytoplasmic. The chain crosses the membrane as a helical span at residues 560 to 580 (MPFLALQALAYAAIVWFALEL). At 581–583 (RGP) the chain is on the extracellular side. Residues 584 to 604 (FIYFFLVLFISLLSTNSFVVF) form a helical membrane-spanning segment. Residues 605–612 (VSSIVPNY) lie on the Cytoplasmic side of the membrane. The helical transmembrane segment at 613–633 (ILGYAAVIAFTALFFLFCGYF) threads the bilayer. The Extracellular segment spans residues 634–699 (LSSEDIPLYW…GTEEIKKRNN (66 aa)). Residue Asn667 is glycosylated (N-linked (GlcNAc...) asparagine). A helical transmembrane segment spans residues 700 to 720 (VLIMLGWAVLYRILFYIILRF). Topologically, residues 721-727 (ASKNQRS) are cytoplasmic.

Belongs to the ABC transporter superfamily. ABCG family. Stunted arbuscule (STR) subfamily. As to quaternary structure, heterodimerizes with STR; the resulting transporter is located in the peri-arbuscular membrane. Expressed constitutively in the vascular tissue of roots.

The protein resides in the cell membrane. Functionally, together with STR, required for arbuscule development in arbuscular mycorrhizal symbiosis. In Medicago truncatula (Barrel medic), this protein is ABC transporter G family member STR2.